We begin with the raw amino-acid sequence, 189 residues long: Putative manganese efflux pump MntP (189 aa).

6 helical membrane passes run 3-23 (IVSTLLLALAMSADAFAAAVS), 41-61 (MIFGVIEATTPLVGWSLGRVA), 62-82 (ADYVTAWDHWIAFSILAFLGI), 103-123 (SFILLAMTALGTSIDAMSVGV), 132-152 (IVPVAFAIGIVTCIMVSAGVM), and 167-187 (IIGGLILIGIGSLILYKHLYG).

Belongs to the MntP (TC 9.B.29) family.

The protein resides in the cell inner membrane. Probably functions as a manganese efflux pump. The polypeptide is Putative manganese efflux pump MntP (Methylobacillus flagellatus (strain ATCC 51484 / DSM 6875 / VKM B-1610 / KT)).